The primary structure comprises 353 residues: Chemerin-like receptor 2 (353 aa).

At 1–41 the chain is on the extracellular side; the sequence is MEVSREMLFEELDNYSYALEYYSQEPDAEENVYPGIVHWIS. A glycan (N-linked (GlcNAc...) asparagine) is linked at Asn-14. A helical transmembrane segment spans residues 42–62; sequence LLLYALAFVLGIPGNAIVIWF. The Cytoplasmic segment spans residues 63 to 73; that stretch reads MGFKWKKTVTT. Residues 74 to 94 traverse the membrane as a helical segment; that stretch reads LWFLNLAIADFVFVLFLPLYI. The Extracellular segment spans residues 95–112; the sequence is SYVALSFHWPFGRWLCKL. Residues Cys-110 and Cys-187 are joined by a disulfide bond. Residues 113-133 traverse the membrane as a helical segment; sequence NSFIAQLNMFSSVFFLTVISL. Residues 134 to 154 lie on the Cytoplasmic side of the membrane; that stretch reads DRYIHLIHPGLSHPHRTLKNS. Residues 155–175 traverse the membrane as a helical segment; the sequence is LLVVLFVWLLASLLGGPTLYF. Residues 176-210 are Extracellular-facing; the sequence is RDTVEVNNRIICYNNFQEYELTLMRHHVLTWVKFL. The chain crosses the membrane as a helical span at residues 211–231; sequence FGYLLPLLTMSSCYLCLIFKT. Topologically, residues 232–247 are cytoplasmic; the sequence is KKQNILISSKHLWMIL. A helical transmembrane segment spans residues 248–268; it reads SVVIAFMVCWTPFHLFSIWEL. Over 269–286 the chain is Extracellular; sequence SIHHNSSFQNVLQGGIPL. Residues 287 to 307 traverse the membrane as a helical segment; sequence STGLAFLNSCLNPILYVLISK. Over 308 to 353 the chain is Cytoplasmic; that stretch reads KFQARFRASVAEVLKRSLWEASCSGTVSEQLRSAETKSLSLLETAQ.

It belongs to the chemokine-like receptor (CMKLR) family.

It is found in the cell membrane. Its function is as follows. Receptor for chemoattractant adipokine chemerin/RARRES2 suggesting a role for this receptor in the regulation of inflammation and energy homesotasis. Signals mainly via beta-arrestin pathway. Binding of RARRES2 activates weakly G proteins, calcium mobilization and MAPK1/MAPK3 (ERK1/2) phosphorylation too. Acts also as a receptor for TAFA1, mediates its effects on neuronal stem-cell proliferation and differentiation via the activation of ROCK/ERK and ROCK/STAT3 signaling pathway. The chain is Chemerin-like receptor 2 (Cmklr2) from Rattus norvegicus (Rat).